Consider the following 91-residue polypeptide: uncharacterized protein (91 aa).

The disordered stretch occupies residues Asn71 to Glu91. The span at Ser76–Glu91 shows a compositional bias: polar residues.

This is an uncharacterized protein from Bacillus subtilis (strain 168).